We begin with the raw amino-acid sequence, 36 residues long: Conotoxin Cal6.1h (36 aa).

Positions 1 to 7 are excised as a propeptide; the sequence is GLGRPSR. 3 cysteine pairs are disulfide-bonded: Cys9-Cys25, Cys16-Cys29, and Cys24-Cys34.

The protein belongs to the conotoxin O1 superfamily. Expressed by the venom duct.

Its subcellular location is the secreted. Probable neurotoxin with unknown target. Possibly targets ion channels. In Californiconus californicus (California cone), this protein is Conotoxin Cal6.1h.